We begin with the raw amino-acid sequence, 148 residues long: MGRFIFVSFSLLVVFFSLSGTEAGVCCPLGWSGYDQNCYKAFEELMNWADAEKFCTQQHKGSHLVSLHNIAEADFVVKKIVSVLKDGVIWMGLNDVWNECNWGWTDGAQLDYKAWNVESNCFIFKTADKPLVTYGLQWDTQFRLQEPG.

Positions 1-23 (MGRFIFVSFSLLVVFFSLSGTEA) are cleaved as a signal peptide. The C-type lectin domain occupies 34 to 148 (YDQNCYKAFE…DTQFRLQEPG (115 aa)).

It belongs to the snaclec family. Heterodimer; disulfide-linked. Contains disulfide bonds. As to expression, expressed by the venom gland.

It is found in the secreted. In terms of biological role, interferes with one step of hemostasis (modulation of platelet aggregation, or coagulation cascade, for example). This is Snaclec 8 from Echis carinatus sochureki (Saw-scaled viper).